Reading from the N-terminus, the 305-residue chain is Acetylglutamate kinase (305 aa).

Residues G67 to G68, R89, and N190 each bind substrate.

This sequence belongs to the acetylglutamate kinase family. ArgB subfamily.

The protein localises to the cytoplasm. It catalyses the reaction N-acetyl-L-glutamate + ATP = N-acetyl-L-glutamyl 5-phosphate + ADP. It participates in amino-acid biosynthesis; L-arginine biosynthesis; N(2)-acetyl-L-ornithine from L-glutamate: step 2/4. Catalyzes the ATP-dependent phosphorylation of N-acetyl-L-glutamate. In Bifidobacterium animalis subsp. lactis (strain AD011), this protein is Acetylglutamate kinase.